The chain runs to 3391 residues: Genome polyprotein (3391 aa).

The segment at 1-15 (MNDQRKEAKNTPFNM) is interaction with host EXOC1. Topologically, residues 1–101 (MNDQRKEAKN…LNILNRRRRS (101 aa)) are cytoplasmic. Residues 37 to 72 (MLQGRGPLKLYMALVAFLRFLTIPPTAGILKRWGTI) are hydrophobic; homodimerization of capsid protein C. Residues 101–114 (SAGMIIMLIPTVMA) constitute a propeptide, ER anchor for the Capsid protein C, removed in mature form by serine protease NS3. The propeptide at 101 to 114 (SAGMIIMLIPTVMA) is ER anchor for the capsid protein C, removed in mature form by serine protease NS3. Residues 102-122 (AGMIIMLIPTVMAFHLTTRNG) form a helical membrane-spanning segment. Topologically, residues 123–242 (EPHMIVSRQE…HVQRIETWIL (120 aa)) are extracellular. Asn183 carries an N-linked (GlcNAc...) asparagine; by host glycan. A helical transmembrane segment spans residues 243–260 (RHPGFTMMAAILAYTIGT). Position 261 (Thr261) is a topological domain, cytoplasmic. A helical transmembrane segment spans residues 262–280 (HFQRALILILLTAVTPSMT). Over 281 to 727 (MRCIGMSNRD…QVFGAIYGAA (447 aa)) the chain is Extracellular. 4 disulfides stabilise this stretch: Cys283/Cys310, Cys340/Cys401, Cys354/Cys385, and Cys372/Cys396. An N-linked (GlcNAc...) asparagine; by host glycan is attached at Asn347. The interval 378–391 (DRGWGNGCGLFGKG) is fusion peptide. N-linked (GlcNAc...) asparagine; by host glycosylation is present at Asn433. 2 cysteine pairs are disulfide-bonded: Cys465–Cys565 and Cys582–Cys613. Residues 728-748 (FSGVSWTMKILIGVIITWIGM) form a helical membrane-spanning segment. The Cytoplasmic portion of the chain corresponds to 749-752 (NSRS). Residues 753-773 (TSLSVTLVLVGIVTLYLGVMV) form a helical membrane-spanning segment. At 774 to 1195 (QADSGCVVSW…MVGATMTDDI (422 aa)) the chain is on the extracellular side. Cystine bridges form between Cys779/Cys790, Cys830/Cys918, Cys954/Cys998, Cys1055/Cys1104, Cys1066/Cys1088, and Cys1087/Cys1091. Asn905 and Asn982 each carry an N-linked (GlcNAc...) asparagine; by host glycan. The N-linked (GlcNAc...) asparagine; by host glycan is linked to Asn1134. Residues 1196–1220 (GMGVTYLALLAAFKVRPTFAAGLLL) form a helical membrane-spanning segment. Residues 1221-1226 (RKLTSK) are Cytoplasmic-facing. A helical membrane pass occupies residues 1227-1245 (ELMMTTIGIVLSSQSTIPE). Over 1246–1269 (TILELTDALALGMMVLKMVRNMEK) the chain is Lumenal. Residues 1270 to 1290 (YQLAVTIMAILCVPNAVILQN) traverse the membrane as a helical segment. Position 1291 (Ala1291) is a topological domain, cytoplasmic. Residues 1292 to 1310 (WKVSCTILAVVSVSPLFLT) form a helical membrane-spanning segment. Residues 1311-1317 (SSQQKTD) lie on the Lumenal side of the membrane. The chain crosses the membrane as a helical span at residues 1318 to 1338 (WIPLALTIKGLNPTAIFLTTL). Over 1339 to 1346 (SRTSKKRS) the chain is Cytoplasmic. A helical membrane pass occupies residues 1347-1367 (WPLNEAIMAVGMVSILASSLL). Residues 1368–1370 (KND) are Lumenal-facing. A helical membrane pass occupies residues 1371–1391 (IPMTGPLVAGGLLTVCYVLTG). At 1392 to 1447 (RSADLELERAADVKWEDQAEISGSSPILSITISEDGSMSIKNEEEEQTLTILIRRG) the chain is on the cytoplasmic side. The tract at residues 1398-1437 (LERAADVKWEDQAEISGSSPILSITISEDGSMSIKNEEEE) is interacts with and activates NS3 protease. An intramembrane region (helical) is located at residues 1448–1468 (LLVISGLFPVSIPITAAAWYL). Residues 1469-2147 (WEVKKQRAGV…LSELPETLET (679 aa)) are Cytoplasmic-facing. Residues 1476–1653 (AGVLWDVPSP…EKSIEDNPEI (178 aa)) enclose the Peptidase S7 domain. Catalysis depends on charge relay system; for serine protease NS3 activity residues His1526, Asp1550, and Ser1610. One can recognise a Helicase ATP-binding domain in the interval 1655–1811 (DDIFRKRRLT…QSNAPIIDEE (157 aa)). The interval 1659 to 1662 (RKRR) is important for RNA-binding. 1668–1675 (LHPGAGKT) contributes to the ATP binding site. Positions 1759 to 1762 (DEAH) match the DEAH box motif. The 168-residue stretch at 1821–1988 (SGHEWVTDFK…IIPSMFEPER (168 aa)) folds into the Helicase C-terminal domain. Lys1863 is modified (N6-acetyllysine; by host). Residues 2148 to 2168 (LLLLTLLATVTGGIFLFLMSA) form a helical membrane-spanning segment. At 2169–2170 (RG) the chain is on the lumenal side. An intramembrane region (helical) is located at residues 2171-2191 (IGKMTLGMCCIITASILLWYA). A topological domain (lumenal) is located at residue Gln2192. Residues 2193–2213 (IQPHWIAASIILEFFLIVLLI) traverse the membrane as a helical segment. At 2214–2228 (PEPEKQRTPQDNQLT) the chain is on the cytoplasmic side. Residues 2229–2249 (YVVIAILTVVAATMANEMGFL) traverse the membrane as a helical segment. The Lumenal segment spans residues 2250–2274 (EKTKKDLGLGSIATQQPESNILDID). The segment at residues 2275–2295 (LRPASAWTLYAVATTFVTPML) is an intramembrane region (helical). Topologically, residues 2296–2316 (RHSIENSSVNVSLTAIANQAT) are lumenal. Residues Asn2301 and Asn2305 are each glycosylated (N-linked (GlcNAc...) asparagine; by host). An intramembrane region (helical) is located at residues 2317–2337 (VLMGLGKGWPLSKMDIGVPLL). Over 2338-2347 (AIGCYSQVNP) the chain is Lumenal. The helical transmembrane segment at 2348–2368 (TTLTAALFLLVAHYAIIGPAL) threads the bilayer. Over 2369 to 2413 (QAKASREAQKRAAAGIMKNPTVDGITVIDLDPIPYDPKFEKQLGQ) the chain is Cytoplasmic. The helical transmembrane segment at 2414–2434 (VMLLVLCVTQVLMMRTTWALC) threads the bilayer. The Lumenal segment spans residues 2435 to 2459 (EALTLATGPISTLSEGNPGRFWNTT). N-linked (GlcNAc...) asparagine; by host glycosylation occurs at Asn2457. A helical transmembrane segment spans residues 2460–2480 (IAVSMANIFRGSYLAGAGLLF). Topologically, residues 2481-3391 (SIMKNTTNTR…REEEEAGVLW (911 aa)) are cytoplasmic. One can recognise an mRNA cap 0-1 NS5-type MT domain in the interval 2493 to 2755 (TGNIGETLGE…DVDLGSGTRN (263 aa)). Ser2547 contacts S-adenosyl-L-methionine. Ser2547 carries the phosphoserine modification. Lys2552 serves as the catalytic For 2'-O-MTase activity. The SUMO-interacting motif motif lies at 2568–2571 (VVDL). The S-adenosyl-L-methionine site is built by Gly2577, Trp2578, Thr2595, Lys2596, Asp2622, and Val2623. Residue Asp2637 is the For 2'-O-MTase activity of the active site. Position 2638 (Ile2638) interacts with S-adenosyl-L-methionine. Active-site for 2'-O-MTase activity residues include Lys2672 and Glu2708. Residue Tyr2710 participates in S-adenosyl-L-methionine binding. Residues Glu2929, His2933, Cys2938, and Cys2941 each coordinate Zn(2+). The region spanning 3020–3169 (AMYADDTAGW…PLDDRLPSAL (150 aa)) is the RdRp catalytic domain. Positions 3203, 3219, and 3338 each coordinate Zn(2+).

This sequence in the N-terminal section; belongs to the class I-like SAM-binding methyltransferase superfamily. mRNA cap 0-1 NS5-type methyltransferase family. In terms of assembly, homodimer. Interacts (via N-terminus) with host EXOC1 (via C-terminus); this interaction results in EXOC1 degradation through the proteasome degradation pathway. As to quaternary structure, forms heterodimers with envelope protein E in the endoplasmic reticulum and Golgi. Homodimer; in the endoplasmic reticulum and Golgi. Interacts with protein prM. Interacts with non-structural protein 1. In terms of assembly, homodimer; Homohexamer when secreted. Interacts with envelope protein E. Interacts with host PRKAA1. As to quaternary structure, interacts (via N-terminus) with serine protease NS3. Forms a heterodimer with serine protease NS3. May form homooligomers. In terms of assembly, forms a heterodimer with NS2B. Interacts with NS4B. Interacts with unphosphorylated RNA-directed RNA polymerase NS5; this interaction stimulates RNA-directed RNA polymerase NS5 guanylyltransferase activity. Interacts with host SHFL. As to quaternary structure, interacts with host MAVS; this interaction inhibits the synthesis of IFN-beta. Interacts with host SHFL. Interacts with host AUP1; the interaction occurs in the presence of Dengue virus NS4B and induces lipophagy which facilitates production of virus progeny particles. May interact with host SRPRA and SEC61G. Interacts with serine protease NS3. In terms of assembly, homodimer. Interacts with host STAT2; this interaction inhibits the phosphorylation of the latter, and, when all viral proteins are present (polyprotein), targets STAT2 for degradation. Interacts with serine protease NS3. Interacts with host PAF1 complex; the interaction may prevent the recruitment of the PAF1 complex to interferon-responsive genes, and thus reduces the immune response. In terms of processing, specific enzymatic cleavages in vivo yield mature proteins. Cleavages in the lumen of endoplasmic reticulum are performed by host signal peptidase, whereas cleavages in the cytoplasmic side are performed by serine protease NS3. Signal cleavage at the 2K-4B site requires a prior NS3 protease-mediated cleavage at the 4A-2K site. Post-translationally, cleaved in post-Golgi vesicles by a host furin, releasing the mature small envelope protein M, and peptide pr. This cleavage is incomplete as up to 30% of viral particles still carry uncleaved prM. N-glycosylated. In terms of processing, N-glycosylated. The excreted form is glycosylated and this is required for efficient secretion of the protein from infected cells. Post-translationally, acetylated by host KAT5. Acetylation modulates NS3 RNA-binding and unwinding activities and plays an important positive role for viral replication. Sumoylation of RNA-directed RNA polymerase NS5 increases NS5 protein stability allowing proper viral RNA replication. In terms of processing, phosphorylated on serines residues. This phosphorylation may trigger NS5 nuclear localization.

The protein resides in the virion. It localises to the host nucleus. The protein localises to the host cytoplasm. It is found in the host perinuclear region. Its subcellular location is the secreted. The protein resides in the virion membrane. It localises to the host endoplasmic reticulum membrane. The protein localises to the host mitochondrion. The catalysed reaction is Selective hydrolysis of -Xaa-Xaa-|-Yaa- bonds in which each of the Xaa can be either Arg or Lys and Yaa can be either Ser or Ala.. It carries out the reaction RNA(n) + a ribonucleoside 5'-triphosphate = RNA(n+1) + diphosphate. It catalyses the reaction a ribonucleoside 5'-triphosphate + H2O = a ribonucleoside 5'-diphosphate + phosphate + H(+). The enzyme catalyses ATP + H2O = ADP + phosphate + H(+). The catalysed reaction is a 5'-end (5'-triphosphoguanosine)-ribonucleoside in mRNA + S-adenosyl-L-methionine = a 5'-end (N(7)-methyl 5'-triphosphoguanosine)-ribonucleoside in mRNA + S-adenosyl-L-homocysteine. It carries out the reaction a 5'-end (N(7)-methyl 5'-triphosphoguanosine)-ribonucleoside in mRNA + S-adenosyl-L-methionine = a 5'-end (N(7)-methyl 5'-triphosphoguanosine)-(2'-O-methyl-ribonucleoside) in mRNA + S-adenosyl-L-homocysteine + H(+). Functionally, plays a role in virus budding by binding to the cell membrane and gathering the viral RNA into a nucleocapsid that forms the core of a mature virus particle. During virus entry, may induce genome penetration into the host cytoplasm after hemifusion induced by the surface proteins. Can migrate to the cell nucleus where it modulates host functions. Overcomes the anti-viral effects of host EXOC1 by sequestering and degrading the latter through the proteasome degradation pathway. Its function is as follows. Inhibits RNA silencing by interfering with host Dicer. Prevents premature fusion activity of envelope proteins in trans-Golgi by binding to envelope protein E at pH6.0. After virion release in extracellular space, gets dissociated from E dimers. In terms of biological role, acts as a chaperone for envelope protein E during intracellular virion assembly by masking and inactivating envelope protein E fusion peptide. prM is the only viral peptide matured by host furin in the trans-Golgi network probably to avoid catastrophic activation of the viral fusion activity in acidic Golgi compartment prior to virion release. prM-E cleavage is inefficient, and many virions are only partially matured. These uncleaved prM would play a role in immune evasion. Functionally, may play a role in virus budding. Exerts cytotoxic effects by activating a mitochondrial apoptotic pathway through M ectodomain. May display a viroporin activity. Its function is as follows. Binds to host cell surface receptor and mediates fusion between viral and cellular membranes. Envelope protein is synthesized in the endoplasmic reticulum in the form of heterodimer with protein prM. They play a role in virion budding in the ER, and the newly formed immature particle is covered with 60 spikes composed of heterodimer between precursor prM and envelope protein E. The virion is transported to the Golgi apparatus where the low pH causes dissociation of PrM-E heterodimers and formation of E homodimers. prM-E cleavage is inefficient, and many virions are only partially matured. These uncleaved prM would play a role in immune evasion. Involved in immune evasion, pathogenesis and viral replication. Once cleaved off the polyprotein, is targeted to three destinations: the viral replication cycle, the plasma membrane and the extracellular compartment. Essential for viral replication. Required for formation of the replication complex and recruitment of other non-structural proteins to the ER-derived membrane structures. Excreted as a hexameric lipoparticle that plays a role against host immune response. Antagonizing the complement function. Binds to the host macrophages and dendritic cells. Inhibits signal transduction originating from Toll-like receptor 3 (TLR3). Mediates complement activation, which may contribute to the pathogenesis of the vascular leakage that occurs in severe dengue disease. Activates autophagy through the AMPK/ERK/mTOR signaling pathway. Mechanistically, acts as the assembly platform for STK11-AMPK interactions and promotes STK11-AMPK interactions. In turn, promotes phosphorylation of the AMPK kinase structural domain and activates AMPK, thereby positively regulating the AMPK/ERK/mTOR signaling pathway and inducing autophagy. In terms of biological role, disrupts the host endothelial glycocalyx layer of host pulmonary microvascular endothelial cells, inducing degradation of sialic acid and shedding of heparan sulfate proteoglycans. NS1 induces expression of sialidases, heparanase, and activates cathepsin L, which activates heparanase via enzymatic cleavage. These effects are probably linked to the endothelial hyperpermeability observed in severe dengue disease. Functionally, component of the viral RNA replication complex that functions in virion assembly and antagonizes the host immune response. Its function is as follows. Required cofactor for the serine protease function of NS3. May have membrane-destabilizing activity and form viroporins. Displays three enzymatic activities: serine protease, NTPase and RNA helicase. NS3 serine protease, in association with NS2B, performs its autocleavage and cleaves the polyprotein at dibasic sites in the cytoplasm: C-prM, NS2A-NS2B, NS2B-NS3, NS3-NS4A, NS4A-2K and NS4B-NS5. NS3 RNA helicase binds RNA and unwinds dsRNA in the 3' to 5' direction. In terms of biological role, regulates the ATPase activity of the NS3 helicase activity. NS4A allows NS3 helicase to conserve energy during unwinding. Plays a role in the inhibition of the host innate immune response. Interacts with host MAVS and thereby prevents the interaction between RIGI and MAVS. In turn, IFN-beta production is impaired. Interacts with host AUP1 which mediates induction of lipophagy in host cells and facilitates production of virus progeny particles. Functionally, functions as a signal peptide for NS4B and is required for the interferon antagonism activity of the latter. Its function is as follows. Induces the formation of ER-derived membrane vesicles where the viral replication takes place. Inhibits interferon (IFN)-induced host STAT1 phosphorylation and nuclear translocation, thereby preventing the establishment of cellular antiviral state by blocking the IFN-alpha/beta pathway. Replicates the viral (+) and (-) RNA genome, and performs the capping of genomes in the cytoplasm. NS5 methylates viral RNA cap at guanine N-7 and ribose 2'-O positions. Besides its role in RNA genome replication, also prevents the establishment of cellular antiviral state by blocking the interferon-alpha/beta (IFN-alpha/beta) signaling pathway. Inhibits host TYK2 and STAT2 phosphorylation, thereby preventing activation of JAK-STAT signaling pathway. May reduce immune responses by preventing the recruitment of the host PAF1 complex to interferon-responsive genes. The polypeptide is Genome polyprotein (Dengue virus type 2 (strain 16681-PDK53) (DENV-2)).